The sequence spans 640 residues: Cytochrome P450 monooxygenase cyp1 (640 aa).

Asparagine 71 is a glycosylation site (N-linked (GlcNAc...) asparagine). Residues 120–139 (LLVFLVGLFLGTIYLLYRYW) form a helical membrane-spanning segment. A glycan (N-linked (GlcNAc...) asparagine) is linked at asparagine 350. Residue cysteine 572 coordinates heme.

It belongs to the cytochrome P450 family. Heme is required as a cofactor.

The protein resides in the membrane. The protein operates within secondary metabolite biosynthesis. Its function is as follows. Cytochrome P450 monooxygenase; part of the gene cluster that mediates the biosynthesis of the glycolipid biosurfactant ustilagic acid (UA). UA is a secreted cellobiose glycolipid that is toxic for many microorganisms and confers biocontrol activity to U.maydis. UA consists of 15,16-dihydroxypalmitic or 2,15,16-trihydroxypalmitic acid, which is O-glycosidically linked to cellobiose at its terminal hydroxyl group. In addition, the cellobiose moiety is acetylated and acylated with a short-chain hydroxy fatty acid. UA biosynthesis starts with omega-hydroxylation of palmitic acid catalyzed by the cytochrome P450 monooxygenase cyp1. Terminal hydroxylation of palmitic acid precedes subterminal hydroxylation catalyzed by the cytochrome P450 monooxygenase cyp2. Sequential glucosylation of the hydroxy fatty acid is probably catalyzed by the glycosyltransferase ugt1. The cellobiose lipid is further decorated by acetylation of the proximal glucose residue and by acylation with a short-chain beta-hydroxy fatty acid at the distal glucose residue. The acyltransferase uat1 may be a good candidate for catalyzing either acetylation or acylation of the cellobiose lipid. The fatty acid synthase fas2 may be involved in synthesis of the carbon backbone of the short-chain beta-hydroxy fatty acid esterified to the cellobiose disaccharide. The secreted UA consists of a mixture of both alpha-hydroxylated and non-hydroxylated glycolipids; therefore, alpha-hydroxylation of the long-chain fatty, catalyzed by the fatty acid hydroxylase ahd1, occurs late in UA biosynthesis and may be the last step before secretion. The chain is Cytochrome P450 monooxygenase cyp1 from Mycosarcoma maydis (Corn smut fungus).